Here is an 80-residue protein sequence, read N- to C-terminus: Large ribosomal subunit protein bL31B (80 aa).

It belongs to the bacterial ribosomal protein bL31 family. Type B subfamily. In terms of assembly, part of the 50S ribosomal subunit.

The sequence is that of Large ribosomal subunit protein bL31B from Streptococcus thermophilus (strain CNRZ 1066).